Here is a 278-residue protein sequence, read N- to C-terminus: HTH-type transcriptional activator RhaS (278 aa).

The HTH araC/xylS-type domain occupies 174–272 (NLLLAWLEDH…NWSPRDIRQG (99 aa)). 2 DNA-binding regions (H-T-H motif) span residues 191–212 (DAVADQFSLSLRTLHRQLKQQT) and 239–262 (VTDIAYRCGFSDSNHFSTLFRREF).

As to quaternary structure, binds DNA as a dimer.

The protein localises to the cytoplasm. Activates expression of the rhaBAD and rhaT operons. The protein is HTH-type transcriptional activator RhaS of Escherichia coli (strain SMS-3-5 / SECEC).